A 318-amino-acid polypeptide reads, in one-letter code: Transcription factor FER-LIKE IRON DEFICIENCY-INDUCED TRANSCRIPTION FACTOR (318 aa).

A disordered region spans residues 90-138 (FDGDSVRAGGEEDEEDYNDGDDSSATTTNNDGTRKTKTDRSRTLISERR). The segment covering 100-111 (EEDEEDYNDGDD) has biased composition (acidic residues). The span at 121-136 (GTRKTKTDRSRTLISE) shows a compositional bias: basic and acidic residues. Positions 127 to 176 (TDRSRTLISERRRRGRMKDKLYALRSLVPNITKMDKASIVGDAVLYVQEL) constitute a bHLH domain.

As to quaternary structure, homodimer. In terms of tissue distribution, expressed in roots and inflorescence, and to a lower extent, in leaves and stems. In roots, confined to the outer cell layers, specifically in the differentiation zone. Also detected in the endodermis and inner tissues of the central cylinder.

It localises to the nucleus. Functionally, transcription factor. Essential protein involved in iron uptake responses. Regulates FRO2 at the level of mRNA accumulation and IRT1 at the level of protein accumulation. Confers enhanced iron mobilization responses at low iron supply. This Arabidopsis thaliana (Mouse-ear cress) protein is Transcription factor FER-LIKE IRON DEFICIENCY-INDUCED TRANSCRIPTION FACTOR (FIT).